A 485-amino-acid polypeptide reads, in one-letter code: Glutamyl-tRNA(Gln) amidotransferase subunit A (485 aa).

Active-site charge relay system residues include K79 and S154. The Acyl-ester intermediate role is filled by S178.

Belongs to the amidase family. GatA subfamily. In terms of assembly, heterotrimer of A, B and C subunits.

It catalyses the reaction L-glutamyl-tRNA(Gln) + L-glutamine + ATP + H2O = L-glutaminyl-tRNA(Gln) + L-glutamate + ADP + phosphate + H(+). Allows the formation of correctly charged Gln-tRNA(Gln) through the transamidation of misacylated Glu-tRNA(Gln) in organisms which lack glutaminyl-tRNA synthetase. The reaction takes place in the presence of glutamine and ATP through an activated gamma-phospho-Glu-tRNA(Gln). In Staphylococcus aureus (strain bovine RF122 / ET3-1), this protein is Glutamyl-tRNA(Gln) amidotransferase subunit A.